The chain runs to 417 residues: Multifunctional CCA protein (417 aa).

Residues Gly8 and Arg11 each coordinate ATP. Residues Gly8 and Arg11 each coordinate CTP. Residues Asp21 and Asp23 each coordinate Mg(2+). Positions 91, 137, and 140 each coordinate ATP. Positions 91, 137, and 140 each coordinate CTP. The HD domain occupies 225-326 (SGIHTLMTLQ…LNVLKKTDAF (102 aa)).

The protein belongs to the tRNA nucleotidyltransferase/poly(A) polymerase family. Bacterial CCA-adding enzyme type 1 subfamily. As to quaternary structure, monomer. Can also form homodimers and oligomers. Mg(2+) is required as a cofactor. It depends on Ni(2+) as a cofactor.

It carries out the reaction a tRNA precursor + 2 CTP + ATP = a tRNA with a 3' CCA end + 3 diphosphate. It catalyses the reaction a tRNA with a 3' CCA end + 2 CTP + ATP = a tRNA with a 3' CCACCA end + 3 diphosphate. Its function is as follows. Catalyzes the addition and repair of the essential 3'-terminal CCA sequence in tRNAs without using a nucleic acid template. Adds these three nucleotides in the order of C, C, and A to the tRNA nucleotide-73, using CTP and ATP as substrates and producing inorganic pyrophosphate. tRNA 3'-terminal CCA addition is required both for tRNA processing and repair. Also involved in tRNA surveillance by mediating tandem CCA addition to generate a CCACCA at the 3' terminus of unstable tRNAs. While stable tRNAs receive only 3'-terminal CCA, unstable tRNAs are marked with CCACCA and rapidly degraded. The sequence is that of Multifunctional CCA protein from Neisseria meningitidis serogroup C / serotype 2a (strain ATCC 700532 / DSM 15464 / FAM18).